A 546-amino-acid polypeptide reads, in one-letter code: Mitochondrial distribution and morphology protein 34 (546 aa).

The region spanning 1–195 (MAFNFNWSPL…LPAIIHRLSL (195 aa)) is the SMP-LTD domain. 5 disordered regions span residues 208–230 (EVKADEEAGPGQDPLLSPPQDPV), 299–319 (SHGGLISPASPPLSRTHSHVA), 344–382 (TMGAGRHPRTRPSRKHKRRVVDLRKPQKLDDTSSTCTDS), 395–416 (SSSARVGEKPDDPITPPVSPDA), and 517–546 (RRIQEGKGPGSVGSNYCGRRDPSPPPAYGQ). Basic residues predominate over residues 349–362 (RHPRTRPSRKHKRR). The span at 363 to 374 (VVDLRKPQKLDD) shows a compositional bias: basic and acidic residues.

Belongs to the MDM34 family. In terms of assembly, component of the ER-mitochondria encounter structure (ERMES) or MDM complex, composed of MMM1, MDM10, MDM12 and MDM34.

Its subcellular location is the mitochondrion outer membrane. Component of the ERMES/MDM complex, which serves as a molecular tether to connect the endoplasmic reticulum (ER) and mitochondria. Components of this complex are involved in the control of mitochondrial shape and protein biogenesis, and function in nonvesicular lipid trafficking between the ER and mitochondria. MDM34 is required for the interaction of the ER-resident membrane protein MMM1 and the outer mitochondrial membrane-resident beta-barrel protein MDM10. This chain is Mitochondrial distribution and morphology protein 34, found in Arthroderma otae (strain ATCC MYA-4605 / CBS 113480) (Microsporum canis).